The primary structure comprises 318 residues: MENNITVVGASNWDTFIYVDKMPRVGETIKGTDLKVSYGGKAANQAVQASLLGSNCTLITKLGDDPSGVNTLKNFKDKNINCEFVSVVSNVPSGCATIIVDKNGDNNIIIIGGSNDLLNEKDVDNAKSQIQNSSLLLCQLEVSLNVTLHALKIAKESNKCKTMLNLTPINNDPLILEMFKFVDILIVNEIELIGLYNSTFNNNNNNEKDFNINQLMEMCDNLIKKFENFENIIVTLGGNGQLLVSKENNKNCHIELKEKVKVVDTSGAGDSFIGSFAHYLVTENKPLKDSIESASKVASISVTRHGTQTSYPKSNEIN.

Substrate-binding positions include 12 to 14 (NWD), 40 to 44 (GKAAN), and glutamate 141. Residues asparagine 188 and 235-240 (TLGGNG) contribute to the ATP site. Residues aspartate 264 and serine 266 each contribute to the K(+) site. 269-270 (GD) contributes to the ATP binding site. Aspartate 270 contacts substrate. Aspartate 270 (proton acceptor) is an active-site residue. K(+)-binding residues include serine 301, arginine 304, glycine 306, and serine 310.

The protein belongs to the carbohydrate kinase PfkB family. Ribokinase subfamily. In terms of assembly, homodimer. Mg(2+) serves as cofactor.

It localises to the cytoplasm. The protein localises to the nucleus. The enzyme catalyses D-ribose + ATP = D-ribose 5-phosphate + ADP + H(+). The protein operates within carbohydrate metabolism; D-ribose degradation; D-ribose 5-phosphate from beta-D-ribopyranose: step 2/2. Its activity is regulated as follows. Activated by a monovalent cation that binds near, but not in, the active site. The most likely occupant of the site in vivo is potassium. Ion binding induces a conformational change that may alter substrate affinity. In terms of biological role, catalyzes the phosphorylation of ribose at O-5 in a reaction requiring ATP and magnesium. The resulting D-ribose-5-phosphate can then be used either for sythesis of nucleotides, histidine, and tryptophan, or as a component of the pentose phosphate pathway. This is Ribokinase (rbsk) from Dictyostelium discoideum (Social amoeba).